A 106-amino-acid chain; its full sequence is Malonate decarboxylase acyl carrier protein (106 aa).

O-(phosphoribosyl dephospho-coenzyme A)serine is present on S28.

The protein belongs to the MdcC family. Post-translationally, covalently binds the prosthetic group of malonate decarboxylase.

It is found in the cytoplasm. Subunit of malonate decarboxylase, it is an acyl carrier protein to which acetyl and malonyl thioester residues are bound via a 2'-(5''-phosphoribosyl)-3'-dephospho-CoA prosthetic group and turn over during the catalytic mechanism. The polypeptide is Malonate decarboxylase acyl carrier protein (Stenotrophomonas maltophilia (strain K279a)).